Reading from the N-terminus, the 188-residue chain is Protein-arginine kinase activator protein (188 aa).

4 short sequence motifs (CXXC metal binding motif) span residues 3–6, 29–32, 87–90, and 105–108; these read CENC, CQTC, CPSC, and CANC. The region spanning 145–180 is the UVR domain; it reads KRKIEEKNEYLKKLIEIQDFEEAAIVRDEIKALKAE.

As to quaternary structure, interacts with McsB and CtsR; the CXXC motifs are needed for the binding.

Its function is as follows. Activates the phosphorylation activity of the protein-arginine kinase McsB. May function as an important molecule for oxidative tolerance in various types of stress including that of heavy metals. Binds to Cu(2+), Zn(2+), Co(2+) and Cd(2+) via its CXXC metal binding motifs. This is Protein-arginine kinase activator protein from Staphylococcus aureus (strain NCTC 8325 / PS 47).